Reading from the N-terminus, the 97-residue chain is YcgL domain-containing protein PMI1171 (97 aa).

The YcgL domain occupies Met3–Leu87.

In Proteus mirabilis (strain HI4320), this protein is YcgL domain-containing protein PMI1171.